We begin with the raw amino-acid sequence, 330 residues long: ADP-L-glycero-D-manno-heptose-6-epimerase (330 aa).

NADP(+)-binding positions include F11–I12, D32–N33, K39, K54, E75–S79, and N92. The active-site Proton acceptor is the Y139. Residue K143 coordinates NADP(+). N168 lines the substrate pocket. NADP(+) contacts are provided by V169 and K177. K177 (proton acceptor) is an active-site residue. Substrate-binding positions include R179, H186, F200 to Y203, R213, and Y292.

It belongs to the NAD(P)-dependent epimerase/dehydratase family. HldD subfamily. In terms of assembly, homopentamer. NADP(+) serves as cofactor.

The catalysed reaction is ADP-D-glycero-beta-D-manno-heptose = ADP-L-glycero-beta-D-manno-heptose. It participates in nucleotide-sugar biosynthesis; ADP-L-glycero-beta-D-manno-heptose biosynthesis; ADP-L-glycero-beta-D-manno-heptose from D-glycero-beta-D-manno-heptose 7-phosphate: step 4/4. Catalyzes the interconversion between ADP-D-glycero-beta-D-manno-heptose and ADP-L-glycero-beta-D-manno-heptose via an epimerization at carbon 6 of the heptose. This is ADP-L-glycero-D-manno-heptose-6-epimerase from Paraburkholderia phymatum (strain DSM 17167 / CIP 108236 / LMG 21445 / STM815) (Burkholderia phymatum).